Consider the following 301-residue polypeptide: ATP synthase subunit gamma, mitochondrial (301 aa).

This sequence belongs to the ATPase gamma chain family. F-type ATPases have 2 components, CF(1) - the catalytic core - and CF(0) - the membrane proton channel. CF(1) has five subunits: alpha(3), beta(3), gamma(1), delta(1), epsilon(1). CF(0) has three main subunits: a, b and c.

It localises to the mitochondrion. The protein localises to the mitochondrion inner membrane. Functionally, mitochondrial membrane ATP synthase (F(1)F(0) ATP synthase or Complex V) produces ATP from ADP in the presence of a proton gradient across the membrane which is generated by electron transport complexes of the respiratory chain. F-type ATPases consist of two structural domains, F(1) - containing the extramembraneous catalytic core, and F(0) - containing the membrane proton channel, linked together by a central stalk and a peripheral stalk. During catalysis, ATP synthesis in the catalytic domain of F(1) is coupled via a rotary mechanism of the central stalk subunits to proton translocation. Part of the complex F(1) domain and the central stalk which is part of the complex rotary element. The gamma subunit protrudes into the catalytic domain formed of alpha(3)beta(3). Rotation of the central stalk against the surrounding alpha(3)beta(3) subunits leads to hydrolysis of ATP in three separate catalytic sites on the beta subunits. The sequence is that of ATP synthase subunit gamma, mitochondrial (atp3) from Schizosaccharomyces pombe (strain 972 / ATCC 24843) (Fission yeast).